We begin with the raw amino-acid sequence, 197 residues long: Holliday junction resolvase RecU (197 aa).

Mg(2+) contacts are provided by Thr-82, Asp-84, Glu-97, and Gln-116.

It belongs to the RecU family. Mg(2+) serves as cofactor.

The protein resides in the cytoplasm. It carries out the reaction Endonucleolytic cleavage at a junction such as a reciprocal single-stranded crossover between two homologous DNA duplexes (Holliday junction).. In terms of biological role, endonuclease that resolves Holliday junction intermediates in genetic recombination. Cleaves mobile four-strand junctions by introducing symmetrical nicks in paired strands. Promotes annealing of linear ssDNA with homologous dsDNA. Required for DNA repair, homologous recombination and chromosome segregation. The chain is Holliday junction resolvase RecU from Streptococcus mutans serotype c (strain ATCC 700610 / UA159).